Here is a 288-residue protein sequence, read N- to C-terminus: Ribosomal protein L11 methyltransferase (288 aa).

Residues Thr134, Gly157, Asp179, and Asn224 each contribute to the S-adenosyl-L-methionine site.

It belongs to the methyltransferase superfamily. PrmA family.

Its subcellular location is the cytoplasm. It catalyses the reaction L-lysyl-[protein] + 3 S-adenosyl-L-methionine = N(6),N(6),N(6)-trimethyl-L-lysyl-[protein] + 3 S-adenosyl-L-homocysteine + 3 H(+). In terms of biological role, methylates ribosomal protein L11. This chain is Ribosomal protein L11 methyltransferase, found in Caulobacter sp. (strain K31).